We begin with the raw amino-acid sequence, 237 residues long: Ubiquinone biosynthesis O-methyltransferase (237 aa).

Positions 38, 58, 79, and 124 each coordinate S-adenosyl-L-methionine.

It belongs to the methyltransferase superfamily. UbiG/COQ3 family.

The enzyme catalyses a 3-demethylubiquinol + S-adenosyl-L-methionine = a ubiquinol + S-adenosyl-L-homocysteine + H(+). It catalyses the reaction a 3-(all-trans-polyprenyl)benzene-1,2-diol + S-adenosyl-L-methionine = a 2-methoxy-6-(all-trans-polyprenyl)phenol + S-adenosyl-L-homocysteine + H(+). It participates in cofactor biosynthesis; ubiquinone biosynthesis. Functionally, O-methyltransferase that catalyzes the 2 O-methylation steps in the ubiquinone biosynthetic pathway. The chain is Ubiquinone biosynthesis O-methyltransferase from Acinetobacter baumannii (strain SDF).